The chain runs to 579 residues: Glucose starvation modulator protein 1 (579 aa).

The zn(2)-C6 fungal-type DNA-binding region spans 20 to 48 (CVFCHEKHLQCDLGRPCQNCSKRGIGDTC). Over residues 43–53 (GIGDTCRDKER) the composition is skewed to basic and acidic residues. 2 disordered regions span residues 43-75 (GIGD…STKS) and 319-342 (QMAS…GETV). Over residues 54-64 (KPRKRGPRKVK) the composition is skewed to basic residues. A compositionally biased stretch (polar residues) spans 330 to 339 (NDTSPESQGG). The PAS domain occupies 444–516 (LLEYESMAKL…DIFHEYLAFG (73 aa)).

This sequence belongs to the ERT1/acuK family.

Its subcellular location is the nucleus. Its function is as follows. Transcription factor which regulates nonfermentable carbon utilization. This Kluyveromyces lactis (strain ATCC 8585 / CBS 2359 / DSM 70799 / NBRC 1267 / NRRL Y-1140 / WM37) (Yeast) protein is Glucose starvation modulator protein 1 (GSM1).